We begin with the raw amino-acid sequence, 262 residues long: Merozoite surface protein 2 (262 aa).

An N-terminal signal peptide occupies residues 1 to 20 (MKVIKTLSIINFFIFVTFNI). N-linked (GlcNAc...) asparagine glycans are attached at residues Asn-22 and Asn-36. A polymorphic region region spans residues 44–188 (AESKPPTGTG…EQTESPELQS (145 aa)). A disordered region spans residues 44-223 (AESKPPTGTG…DSQKECTDGN (180 aa)). Positions 51-66 (GTGGSGSAGSGAGASA) are enriched in gly residues. Low complexity predominate over residues 67-111 (GNGANPGADAERSPSTPATPATPATTTTTTTTNDAEASTSTSSEN). Residues 112-127 (PNHKNAETNPKGKGEV) show a composition bias toward basic and acidic residues. Polar residues-rich tracts occupy residues 129-155 (KPNQ…NVPP) and 162-190 (KSPT…QSAP). Asn-139 is a glycosylation site (N-linked (GlcNAc...) asparagine). N-linked (GlcNAc...) asparagine glycosylation occurs at Asn-211. Cys-219 and Cys-227 are oxidised to a cystine. 2 N-linked (GlcNAc...) asparagine glycosylation sites follow: Asn-235 and Asn-236. Asn-236 carries GPI-anchor amidated asparagine lipidation. The propeptide at 237–262 (SSNIASINKFVVLISATLVLSFAIFI) is removed in mature form.

The protein localises to the cell membrane. Its function is as follows. May play a role in the merozoite attachment to the erythrocyte. The chain is Merozoite surface protein 2 from Plasmodium falciparum (isolate Camp / Malaysia).